Consider the following 371-residue polypeptide: N-acetyldiaminopimelate deacetylase (371 aa).

The active site involves Asp68. The active-site Proton acceptor is the Glu127.

It belongs to the peptidase M20A family. N-acetyldiaminopimelate deacetylase subfamily.

It carries out the reaction N-acetyl-(2S,6S)-2,6-diaminopimelate + H2O = (2S,6S)-2,6-diaminopimelate + acetate. The protein operates within amino-acid biosynthesis; L-lysine biosynthesis via DAP pathway; LL-2,6-diaminopimelate from (S)-tetrahydrodipicolinate (acetylase route): step 3/3. Catalyzes the conversion of N-acetyl-diaminopimelate to diaminopimelate and acetate. The polypeptide is N-acetyldiaminopimelate deacetylase (Listeria monocytogenes serovar 1/2a (strain ATCC BAA-679 / EGD-e)).